The following is a 433-amino-acid chain: Serine--tRNA ligase (433 aa).

235 to 237 serves as a coordination point for L-serine; it reads TSE. 266–268 contributes to the ATP binding site; that stretch reads RSE. E289 serves as a coordination point for L-serine. 353–356 provides a ligand contact to ATP; it reads EISS. S388 contacts L-serine.

Belongs to the class-II aminoacyl-tRNA synthetase family. Type-1 seryl-tRNA synthetase subfamily. As to quaternary structure, homodimer. The tRNA molecule binds across the dimer.

It localises to the cytoplasm. It catalyses the reaction tRNA(Ser) + L-serine + ATP = L-seryl-tRNA(Ser) + AMP + diphosphate + H(+). The catalysed reaction is tRNA(Sec) + L-serine + ATP = L-seryl-tRNA(Sec) + AMP + diphosphate + H(+). It participates in aminoacyl-tRNA biosynthesis; selenocysteinyl-tRNA(Sec) biosynthesis; L-seryl-tRNA(Sec) from L-serine and tRNA(Sec): step 1/1. Its function is as follows. Catalyzes the attachment of serine to tRNA(Ser). Is also able to aminoacylate tRNA(Sec) with serine, to form the misacylated tRNA L-seryl-tRNA(Sec), which will be further converted into selenocysteinyl-tRNA(Sec). The sequence is that of Serine--tRNA ligase from Burkholderia pseudomallei (strain 668).